The sequence spans 785 residues: MDKKALKRLEYHKVLEQLAACSGSSLGREKIMAMEPLDNLQAILRKQEETSEGRKLLRLEPFAEAGGWKDIRAQLRKAGQGAILDPEELLAVADTLTAGRTIRKFFQDRQEQYPLLYEVSSALVSLPELERKIKNAILPGGEVADGASPELAQIRRRLAAAQAQVKEHLEHIIRSPSYQKYLQEPIVTIREGRYVVPVKIEHRSQVPGIVHDQSASGATLFIEPMAVVEKNNELRRLMAAEKREIQRILAELSAGVAQHAGPIGASLEALGELDFIMARARYSQKLDAWAPLLEGEACMDIRRGRHPLLQGEVVPIDIRLGADFDTLVITGPNTGGKTVALKTAGLLVLMAQSGLHIPAGEGSRLGIFRQVFADIGDEQSIEQSLSTFSSHMNNIVEIIGKAGPDSLVLLDELGAGTDPAEGAALAQSILEKLHSAGAKTVATTHYGELKDFALTRERVENASVEFDAITLRPTYRLLIGKPGRSNAFEIAARLGLPEEVVKRARSFLTAEHIQAEELMRSLEKTQQEAEAERRRAAELASEARALKERYEKIEADLASKRESILSKAAEEAQALVRAARLEAEAAVRELREKMAEEAARERENAIREAREKLRKLQQRVGRAVPEKTVPGEAPAGLRPGEEVFLTRYNQKGYVLEPPGAGGEVLVQVGVIKMNVPLRELRRVKEARPAGGQSEVAGVLLNKAREISPELDLRGLYADEALLEVEKYLDDAYLAGLSRVYLIHGKGTGSLRAAIHRQLSGHRRVKSFRLGEHGEGGLGVTVVELA.

G331–T338 contributes to the ATP binding site. In terms of domain architecture, Smr spans L710–A785.

The protein belongs to the DNA mismatch repair MutS family. MutS2 subfamily. In terms of assembly, homodimer. Binds to stalled ribosomes, contacting rRNA.

Functionally, endonuclease that is involved in the suppression of homologous recombination and thus may have a key role in the control of bacterial genetic diversity. Acts as a ribosome collision sensor, splitting the ribosome into its 2 subunits. Detects stalled/collided 70S ribosomes which it binds and splits by an ATP-hydrolysis driven conformational change. Acts upstream of the ribosome quality control system (RQC), a ribosome-associated complex that mediates the extraction of incompletely synthesized nascent chains from stalled ribosomes and their subsequent degradation. Probably generates substrates for RQC. This is Endonuclease MutS2 from Pelotomaculum thermopropionicum (strain DSM 13744 / JCM 10971 / SI).